The following is a 309-amino-acid chain: Putative S-adenosyl-L-methionine-dependent methyltransferase Mvan_0104 (309 aa).

S-adenosyl-L-methionine-binding positions include Asp134 and 163–164 (DL).

It belongs to the UPF0677 family.

In terms of biological role, exhibits S-adenosyl-L-methionine-dependent methyltransferase activity. The polypeptide is Putative S-adenosyl-L-methionine-dependent methyltransferase Mvan_0104 (Mycolicibacterium vanbaalenii (strain DSM 7251 / JCM 13017 / BCRC 16820 / KCTC 9966 / NRRL B-24157 / PYR-1) (Mycobacterium vanbaalenii)).